The primary structure comprises 310 residues: p-hydroxybenzoic acid efflux pump subunit AaeA (310 aa).

Residues 12 to 32 (AITLVLVILAFIAIFRAWVYY) form a helical membrane-spanning segment.

This sequence belongs to the membrane fusion protein (MFP) (TC 8.A.1) family.

The protein resides in the cell inner membrane. Its function is as follows. Forms an efflux pump with AaeB. The sequence is that of p-hydroxybenzoic acid efflux pump subunit AaeA from Salmonella gallinarum (strain 287/91 / NCTC 13346).